Reading from the N-terminus, the 134-residue chain is Late embryogenesis abundant protein 6 (134 aa).

Residues 31–45 (ERAMARTKEEKEIAH) are compositionally biased toward basic and acidic residues. Disordered stretches follow at residues 31 to 53 (ERAMARTKEEKEIAHQRRKAKEA) and 80 to 134 (VTDH…HHHY). Positions 34–70 (MARTKEEKEIAHQRRKAKEAEANMDMHMAKAAHAEDK) form a coiled coil. The segment covering 115–127 (PPQTYHPTYPPTG) has biased composition (low complexity).

The protein belongs to the LEA type 1 family.

In terms of biological role, involved dehydration tolerance. Involved in the adaptive response of vascular plants to withstand water deficit. May possess chaperone-like activity under water deficit. In Arabidopsis thaliana (Mouse-ear cress), this protein is Late embryogenesis abundant protein 6.